A 1230-amino-acid chain; its full sequence is DNA-directed RNA polymerase, mitochondrial (1230 aa).

Residues 1–41 (MSALCWGRGAAGLKRALRPCGRPGLPGKEGTAGGVCGPRRS) constitute a mitochondrion transit peptide. Disordered regions lie at residues 18–55 (RPCGRPGLPGKEGTAGGVCGPRRSSSASPQEQDQDRRK), 95–115 (GSGDGSLQPPRKVQMGAKDAT), and 731–750 (VPAPPSEAPQPPEAHLPHSA). Pro residues predominate over residues 732 to 744 (PAPPSEAPQPPEA). A mediates interaction with TEFM region spans residues 802-1230 (FRGRTYPCPP…QVKRSTYFFS (429 aa)). Catalysis depends on residues Asp922, Lys991, and Asp1151.

Belongs to the phage and mitochondrial RNA polymerase family. As to quaternary structure, homodimer. Component of the mitochondrial transcription initiation complex, composed at least of TFB2M, TFAM and POLRMT. In this complex TFAM recruits POLRMT to the promoter whereas TFB2M induces structural changes in POLRMT to enable promoter opening and trapping of the DNA non-template strand. Upon metabolic stress, forms a complex composed of FOXO3, SIRT3 and mitochondrial RNA polymerase POLRMT; the complex is recruited to mtDNA in a SIRT3-dependent manner. Also forms a complex composed of FOXO3, SIRT3, TFAM and POLRMT. Interacts with TFB1M and TFB2M, leading to the stimulation of transcription. Interacts with TEFM. Interacts with MTRES1.

It is found in the mitochondrion. It carries out the reaction RNA(n) + a ribonucleoside 5'-triphosphate = RNA(n+1) + diphosphate. Functionally, DNA-dependent RNA polymerase catalyzes the transcription of mitochondrial DNA into RNA using the four ribonucleoside triphosphates as substrates. Component of the mitochondrial transcription initiation complex, composed at least of TFB2M, TFAM and POLRMT that is required for basal transcription of mitochondrial DNA. In this complex, TFAM recruits POLRMT to a specific promoter whereas TFB2M induces structural changes in POLRMT to enable promoter opening and trapping of the DNA non-template strand. Has DNA primase activity. Catalyzes the synthesis of short RNA primers that are necessary for the initiation of lagging-strand DNA synthesis from the origin of light-strand DNA replication (OriL). This is DNA-directed RNA polymerase, mitochondrial from Homo sapiens (Human).